A 201-amino-acid polypeptide reads, in one-letter code: MDTLVPINVYVKAGIHIGTRHLTKDMKPYVSKIREDGLAIFDIRKIDERLRLASKMLSYYEPNEILVVGRRETAITPIKKFSEITKVKAFPGRYPPGTLTNPQLKYYMEPEVILITDPIMDKNALHDAYESGITILALCDTNHTKNYIDFCIPANNRGSKSLALIYWILAREYLRNRGVIGKDEQLKVPVEEFETKITVEE.

The protein belongs to the universal ribosomal protein uS2 family.

This Nanoarchaeum equitans (strain Kin4-M) protein is Small ribosomal subunit protein uS2.